Consider the following 78-residue polypeptide: Defensin beta 136 (78 aa).

Positions 1–21 (MNLCLSALLFFLVILLPSGKG) are cleaved as a signal peptide. Disulfide bonds link cysteine 33/cysteine 60, cysteine 40/cysteine 54, and cysteine 44/cysteine 61.

Belongs to the beta-defensin family.

It is found in the secreted. Functionally, host defense peptide that exhibits antibacterial and antifungal activity. Exhibits antimicrobial activity against E.coli, S.aureus and C.albicans (in vitro). Has high lipopolysaccharide (LPS)-binding affinity, and may thereby be involved in immunoregulation through LPS neutralization. The sequence is that of Defensin beta 136 (DEFB136) from Homo sapiens (Human).